Here is a 918-residue protein sequence, read N- to C-terminus: Dual serine/threonine and tyrosine protein kinase (918 aa).

The span at 1-19 shows a compositional bias: basic and acidic residues; sequence MQKDGTRSSRRMEEGDRRN. The segment at 1 to 29 is disordered; that stretch reads MQKDGTRSSRRMEEGDRRNGSTGSSGSVS. The region spanning 643 to 897 is the Protein kinase domain; that stretch reads PRIGRELGRG…PLMGIVQPML (255 aa). ATP-binding positions include 649 to 657 and Lys-672; that span reads LGRGQYGVV. The active-site Proton acceptor is the Asp-768.

The protein belongs to the protein kinase superfamily. Ser/Thr protein kinase family.

It localises to the cytoplasm. The protein resides in the cell membrane. It is found in the apical cell membrane. The protein localises to the basolateral cell membrane. Its subcellular location is the cell junction. It carries out the reaction L-seryl-[protein] + ATP = O-phospho-L-seryl-[protein] + ADP + H(+). The catalysed reaction is L-threonyl-[protein] + ATP = O-phospho-L-threonyl-[protein] + ADP + H(+). The enzyme catalyses L-tyrosyl-[protein] + ATP = O-phospho-L-tyrosyl-[protein] + ADP + H(+). Functionally, may act as a positive regulator of ERK phosphorylation downstream of fibroblast growth factor-receptor activation. May induce both caspase-dependent apoptosis and caspase-independent cell death. May play a role in the embryonic development. This is Dual serine/threonine and tyrosine protein kinase (dstyk) from Xenopus tropicalis (Western clawed frog).